Reading from the N-terminus, the 195-residue chain is Capsid protein (195 aa).

Positions Asn-148–Cys-195 are disordered. Positions Val-161–Ser-188 are enriched in basic residues. 3 positions are modified to phosphoserine; by host: Ser-167, Ser-174, and Ser-182. The stretch at Ser-167–Thr-172 is one 1; half-length repeat. A 3 X 7 AA repeats of S-P-R-R-R-[PR]-S region spans residues Ser-167–Ser-188. Residues Arg-170 to Arg-187 carry the Bipartite nuclear localization signal motif. Tandem repeats lie at residues Ser-174 to Ser-180 and Ser-182 to Ser-188. Residues Ala-189–Cys-195 are RNA binding.

This sequence belongs to the orthohepadnavirus core antigen family. In terms of assembly, homodimerizes, then multimerizes. Interacts with cytosol exposed regions of viral L glycoprotein present in the reticulum-to-Golgi compartment. Interacts with human FLNB. Phosphorylated form interacts with host importin alpha; this interaction depends on the exposure of the NLS, which itself depends upon genome maturation and/or phosphorylation of the capsid protein. Interacts with host NUP153. Phosphorylated by host SRPK1, SRPK2, and maybe protein kinase C or GAPDH. Phosphorylation is critical for pregenomic RNA packaging. Protein kinase C phosphorylation is stimulated by HBx protein and may play a role in transport of the viral genome to the nucleus at the late step during the viral replication cycle.

It localises to the virion. It is found in the host cytoplasm. Functionally, self assembles to form an icosahedral capsid. Most capsids appear to be large particles with an icosahedral symmetry of T=4 and consist of 240 copies of capsid protein, though a fraction forms smaller T=3 particles consisting of 180 capsid proteins. Entering capsids are transported along microtubules to the nucleus. Phosphorylation of the capsid is thought to induce exposure of nuclear localization signal in the C-terminal portion of the capsid protein that allows binding to the nuclear pore complex via the importin (karyopherin-) alpha and beta. Capsids are imported in intact form through the nuclear pore into the nuclear basket, where it probably binds NUP153. Only capsids that contain the mature viral genome can release the viral DNA and capsid protein into the nucleoplasm. Immature capsids get stuck in the basket. Capsids encapsulate the pre-genomic RNA and the P protein. Pre-genomic RNA is reverse-transcribed into DNA while the capsid is still in the cytoplasm. The capsid can then either be directed to the nucleus, providing more genomes for transcription, or bud through the endoplasmic reticulum to provide new virions. This is Capsid protein from Hepatitis B virus genotype G (isolate United States/USG17/2002) (HBV-G).